The sequence spans 405 residues: Argininosuccinate synthase (405 aa).

ATP contacts are provided by residues 10 to 18 (AYSGGLDTS) and Ala-37. L-citrulline is bound by residues Tyr-88 and Ser-93. An ATP-binding site is contributed by Gly-118. Residues Thr-120, Asn-124, and Asp-125 each coordinate L-aspartate. L-citrulline is bound at residue Asn-124. L-citrulline is bound by residues Arg-128, Ser-179, Ser-188, Glu-264, and Tyr-276.

The protein belongs to the argininosuccinate synthase family. Type 1 subfamily. Homotetramer.

It localises to the cytoplasm. It catalyses the reaction L-citrulline + L-aspartate + ATP = 2-(N(omega)-L-arginino)succinate + AMP + diphosphate + H(+). It functions in the pathway amino-acid biosynthesis; L-arginine biosynthesis; L-arginine from L-ornithine and carbamoyl phosphate: step 2/3. This chain is Argininosuccinate synthase, found in Nitrosococcus oceani (strain ATCC 19707 / BCRC 17464 / JCM 30415 / NCIMB 11848 / C-107).